Here is a 182-residue protein sequence, read N- to C-terminus: Adenine phosphoribosyltransferase (182 aa).

Belongs to the purine/pyrimidine phosphoribosyltransferase family. In terms of assembly, homodimer.

Its subcellular location is the cytoplasm. The enzyme catalyses AMP + diphosphate = 5-phospho-alpha-D-ribose 1-diphosphate + adenine. It participates in purine metabolism; AMP biosynthesis via salvage pathway; AMP from adenine: step 1/1. Functionally, catalyzes a salvage reaction resulting in the formation of AMP, that is energically less costly than de novo synthesis. This chain is Adenine phosphoribosyltransferase, found in Campylobacter jejuni subsp. jejuni serotype O:23/36 (strain 81-176).